The sequence spans 450 residues: Tubulin alpha-3E chain (450 aa).

The MREC motif motif lies at Met-1–Cys-4. A GTP-binding site is contributed by Gln-11. Lys-40 is modified (N6-acetyllysine). Positions 71, 140, 144, 145, 179, 206, and 228 each coordinate GTP. Residue Glu-71 participates in Mg(2+) binding. Residue Glu-254 is part of the active site. Tyr-282 is modified (3'-nitrotyrosine). Phosphoserine is present on Ser-439. Tyr-450 carries the 3'-nitrotyrosine modification.

Belongs to the tubulin family. As to quaternary structure, dimer of alpha and beta chains. A typical microtubule is a hollow water-filled tube with an outer diameter of 25 nm and an inner diameter of 15 nM. Alpha-beta heterodimers associate head-to-tail to form protofilaments running lengthwise along the microtubule wall with the beta-tubulin subunit facing the microtubule plus end conferring a structural polarity. Microtubules usually have 13 protofilaments but different protofilament numbers can be found in some organisms and specialized cells. Mg(2+) serves as cofactor. Some glutamate residues at the C-terminus are polyglutamylated, resulting in polyglutamate chains on the gamma-carboxyl group. Polyglutamylation plays a key role in microtubule severing by spastin (SPAST). SPAST preferentially recognizes and acts on microtubules decorated with short polyglutamate tails: severing activity by SPAST increases as the number of glutamates per tubulin rises from one to eight, but decreases beyond this glutamylation threshold. Glutamylation is also involved in cilia motility. Post-translationally, some glutamate residues at the C-terminus are monoglycylated but not polyglycylated due to the absence of functional TTLL10 in human. Monoglycylation is mainly limited to tubulin incorporated into cilia and flagella axonemes, which is required for their stability and maintenance. Flagella glycylation controls sperm motility. Both polyglutamylation and monoglycylation can coexist on the same protein on adjacent residues, and lowering glycylation levels increases polyglutamylation, and reciprocally. In terms of processing, acetylation of alpha chains at Lys-40 is located inside the microtubule lumen. This modification has been correlated with increased microtubule stability, intracellular transport and ciliary assembly. Methylation of alpha chains at Lys-40 is found in mitotic microtubules and is required for normal mitosis and cytokinesis contributing to genomic stability. Post-translationally, nitration of Tyr-450 is irreversible and interferes with normal dynein intracellular distribution. In terms of processing, undergoes a tyrosination/detyrosination cycle, the cyclic removal and re-addition of a C-terminal tyrosine residue by the enzymes tubulin tyrosine carboxypeptidase (MATCAP1/KIAA0895L, VASH1 or VASH2) and tubulin tyrosine ligase (TTL), respectively. Tyrosination promotes microtubule interaction with CAP-Gly domain-containing proteins such as CLIP1, CLIP2 and DCTN1. Tyrosination regulates the initiation of dynein-dynactin motility via interaction with DCTN1, which brings the dynein-dynactin complex into contact with microtubules. In neurons, tyrosinated tubulins mediate the initiation of retrograde vesicle transport. Post-translationally, detyrosination is involved in metaphase plate congression by guiding chromosomes during mitosis: detyrosination promotes interaction with CENPE, promoting pole-proximal transport of chromosomes toward the equator. Detyrosination increases microtubules-dependent mechanotransduction in dystrophic cardiac and skeletal muscle. In cardiomyocytes, detyrosinated microtubules are required to resist to contractile compression during contraction: detyrosination promotes association with desmin (DES) at force-generating sarcomeres, leading to buckled microtubules and mechanical resistance to contraction.

The protein localises to the cytoplasm. The protein resides in the cytoskeleton. It carries out the reaction GTP + H2O = GDP + phosphate + H(+). Its function is as follows. Tubulin is the major constituent of microtubules, a cylinder consisting of laterally associated linear protofilaments composed of alpha- and beta-tubulin heterodimers. Microtubules grow by the addition of GTP-tubulin dimers to the microtubule end, where a stabilizing cap forms. Below the cap, tubulin dimers are in GDP-bound state, owing to GTPase activity of alpha-tubulin. The chain is Tubulin alpha-3E chain (TUBA3E) from Homo sapiens (Human).